The following is a 471-amino-acid chain: Apyrase 1 (471 aa).

At 1-21 (MTAKRAIGRHESLADKVHRHR) the chain is on the cytoplasmic side. The helical; Signal-anchor for type II membrane protein transmembrane segment at 22 to 42 (GLLLVISIPIVLIALVLLLMP) threads the bilayer. The Lumenal portion of the chain corresponds to 43–471 (GTSTSVSVIE…GSAIEAVSSP (429 aa)). An ATP-binding site is contributed by 72–82 (VIFDAGSSGSR). Glutamate 194 functions as the Proton acceptor in the catalytic mechanism. 218-228 (GVVDLGGGSVQ) contacts ATP. An N-linked (GlcNAc...) asparagine glycan is attached at asparagine 333.

This sequence belongs to the GDA1/CD39 NTPase family. Requires Ca(2+) as cofactor. As to expression, expressed in roots, root hairs, root cap, leaves, stems, trichomes, phloem throughout the plant, guard cells, filaments of young stamens, stipules, papillae of stigmas, pollen, pollen tubes and the abscission zone of siliques.

Its subcellular location is the golgi apparatus membrane. It is found in the membrane. The enzyme catalyses a ribonucleoside 5'-triphosphate + 2 H2O = a ribonucleoside 5'-phosphate + 2 phosphate + 2 H(+). In terms of biological role, catalyzes the hydrolysis of phosphoanhydride bonds of nucleoside tri- and di-phosphates. Substrate preference is ATP &gt; ADP. Functions with APY2 to reduce extracellular ATP level which is essential for pollen germination and normal plant development. Plays a role in the regulation of stomatal function by modulating extracellular ATP levels in guard cells. The chain is Apyrase 1 (APY1) from Arabidopsis thaliana (Mouse-ear cress).